Consider the following 210-residue polypeptide: Adenylate kinase (210 aa).

Residue 10–15 participates in ATP binding; that stretch reads GSGKGT. The NMP stretch occupies residues 30-54; it reads SCGDILRKQNKCCDINKLIKKGELI. AMP contacts are provided by residues Arg-36, 52–54, 80–83, and Gln-87; these read ELI and GFPR. Residues 117–154 form an LID region; that stretch reads GRIIDKVSGEIYHLKFNPPKFITEKSNKNKILVRRLDD. ATP is bound by residues Arg-118 and 127–128; that span reads IY. Residues Arg-151 and Arg-162 each coordinate AMP. ATP is bound at residue Phe-195.

This sequence belongs to the adenylate kinase family. Monomer.

It is found in the cytoplasm. It catalyses the reaction AMP + ATP = 2 ADP. It functions in the pathway purine metabolism; AMP biosynthesis via salvage pathway; AMP from ADP: step 1/1. In terms of biological role, catalyzes the reversible transfer of the terminal phosphate group between ATP and AMP. Plays an important role in cellular energy homeostasis and in adenine nucleotide metabolism. This Wigglesworthia glossinidia brevipalpis protein is Adenylate kinase.